Consider the following 582-residue polypeptide: Zinc finger protein 614 (582 aa).

Residues 8–79 (LTLEDVAVEF…VAKIQNKNCP (72 aa)) form the KRAB domain. Residues 202 to 224 (HACIECEQTFLRKSQLIYHENIH) form a C2H2-type 1 zinc finger. The C2H2-type 2; degenerate zinc finger occupies 254–278 (KICIPNEYRKGSTVNSRLIAHQQTH). C2H2-type zinc fingers lie at residues 284–306 (YMCSECGKGFTMKRYLIAHQRTH), 312–334 (YVCNECGKGFTVKSNLIVHQRTH), 340–362 (YICSECGKGFTMKRYLVVHQRTH), 368–390 (YICSECGKGFTVKSNLIVHQRSH), 396–418 (YICSECGKGFTVKRTLIIHQRTH), 424–446 (YICNECGKGFTTKRTLIIHQRTH), 452–474 (YECNECGKAFSQKICLIQHERCH), 480–502 (FVCTECGKSYSHKYGLITHQRIH), 508–530 (YECNECGKAFTTKSVLNVHQRTH), and 536–558 (YGCSDCEKAFSHLSNLVKHKKMH).

The protein belongs to the krueppel C2H2-type zinc-finger protein family.

The protein resides in the nucleus. In terms of biological role, may be involved in transcriptional regulation. The polypeptide is Zinc finger protein 614 (ZNF614) (Macaca fascicularis (Crab-eating macaque)).